We begin with the raw amino-acid sequence, 459 residues long: tRNA modification GTPase MnmE (459 aa).

(6S)-5-formyl-5,6,7,8-tetrahydrofolate is bound by residues Arg-22, Glu-85, and Arg-124. The TrmE-type G domain occupies 221 to 380 (GLSTVIVGKP…LEIQIRDLFF (160 aa)). Asn-231 lines the K(+) pocket. GTP contacts are provided by residues 231-236 (NVGKSS), 250-256 (TEVAGTT), and 275-278 (DTAG). Position 235 (Ser-235) interacts with Mg(2+). Residues Thr-250, Val-252, and Thr-255 each contribute to the K(+) site. Mg(2+) is bound at residue Thr-256. Lys-459 lines the (6S)-5-formyl-5,6,7,8-tetrahydrofolate pocket.

This sequence belongs to the TRAFAC class TrmE-Era-EngA-EngB-Septin-like GTPase superfamily. TrmE GTPase family. As to quaternary structure, homodimer. Heterotetramer of two MnmE and two MnmG subunits. K(+) is required as a cofactor.

Its subcellular location is the cytoplasm. In terms of biological role, exhibits a very high intrinsic GTPase hydrolysis rate. Involved in the addition of a carboxymethylaminomethyl (cmnm) group at the wobble position (U34) of certain tRNAs, forming tRNA-cmnm(5)s(2)U34. In Staphylococcus aureus (strain MSSA476), this protein is tRNA modification GTPase MnmE.